The sequence spans 76 residues: UPF0291 protein MW2494 (76 aa).

Belongs to the UPF0291 family.

It is found in the cytoplasm. The chain is UPF0291 protein MW2494 from Staphylococcus aureus (strain MW2).